Reading from the N-terminus, the 239-residue chain is Ribosomal RNA small subunit methyltransferase G (239 aa).

Residues Gly78, Phe83, 129 to 130, and Arg148 contribute to the S-adenosyl-L-methionine site; that span reads AE.

It belongs to the methyltransferase superfamily. RNA methyltransferase RsmG family.

It localises to the cytoplasm. Functionally, specifically methylates the N7 position of a guanine in 16S rRNA. This is Ribosomal RNA small subunit methyltransferase G from Clostridium beijerinckii (strain ATCC 51743 / NCIMB 8052) (Clostridium acetobutylicum).